Consider the following 215-residue polypeptide: Ribosomal RNA small subunit methyltransferase G (215 aa).

S-adenosyl-L-methionine-binding positions include glycine 77, phenylalanine 82, 130–131 (IE), and arginine 146.

The protein belongs to the methyltransferase superfamily. RNA methyltransferase RsmG family.

The protein resides in the cytoplasm. The enzyme catalyses guanosine(527) in 16S rRNA + S-adenosyl-L-methionine = N(7)-methylguanosine(527) in 16S rRNA + S-adenosyl-L-homocysteine. In terms of biological role, specifically methylates the N7 position of guanine in position 527 of 16S rRNA. This Bartonella bacilliformis (strain ATCC 35685 / KC583 / Herrer 020/F12,63) protein is Ribosomal RNA small subunit methyltransferase G.